The chain runs to 435 residues: Putative FBD-associated F-box protein At5g56820 (435 aa).

The 47-residue stretch at 14–60 folds into the F-box domain; that stretch reads SDRISYLPDDLLLRILSFIHTSDAISTSLLSKRWKFVWKMMPTLDLD. Positions 341 to 390 constitute an FBD domain; the sequence is VRKPNSVPECLTFHLETLEWQGYAGRPEDKEIAVYILGNALRLNTATISR.

The chain is Putative FBD-associated F-box protein At5g56820 from Arabidopsis thaliana (Mouse-ear cress).